A 55-amino-acid polypeptide reads, in one-letter code: Large ribosomal subunit protein bL33 (55 aa).

The protein belongs to the bacterial ribosomal protein bL33 family.

This is Large ribosomal subunit protein bL33 from Gluconobacter oxydans (strain 621H) (Gluconobacter suboxydans).